We begin with the raw amino-acid sequence, 187 residues long: Plasmodium-specific hydrophobic abundant protein (187 aa).

The first 18 residues, 1-18 (MMKYVFVALCLFAVVALA), serve as a signal peptide directing secretion.

This sequence to HAP-S protein.

It localises to the membrane. This Physarum polycephalum (Slime mold) protein is Plasmodium-specific hydrophobic abundant protein.